The sequence spans 103 residues: Large ribosomal subunit protein bL21 (103 aa).

The protein belongs to the bacterial ribosomal protein bL21 family. Part of the 50S ribosomal subunit. Contacts protein L20.

Functionally, this protein binds to 23S rRNA in the presence of protein L20. The polypeptide is Large ribosomal subunit protein bL21 (Pseudomonas paraeruginosa (strain DSM 24068 / PA7) (Pseudomonas aeruginosa (strain PA7))).